The sequence spans 359 residues: Glutamate 5-kinase (359 aa).

Lys7 lines the ATP pocket. Residues Ser47, Asp135, and Asn147 each contribute to the substrate site. Position 202–208 (202–208 (SGGITSK)) interacts with ATP. Positions 266-343 (KGSIFINEGA…DQLEDVLGYS (78 aa)) constitute a PUA domain.

This sequence belongs to the glutamate 5-kinase family.

The protein localises to the cytoplasm. It carries out the reaction L-glutamate + ATP = L-glutamyl 5-phosphate + ADP. It participates in amino-acid biosynthesis; L-proline biosynthesis; L-glutamate 5-semialdehyde from L-glutamate: step 1/2. In terms of biological role, catalyzes the transfer of a phosphate group to glutamate to form L-glutamate 5-phosphate. This Kosmotoga olearia (strain ATCC BAA-1733 / DSM 21960 / TBF 19.5.1) protein is Glutamate 5-kinase.